Consider the following 432-residue polypeptide: Glutamate-1-semialdehyde 2,1-aminomutase 1 (432 aa).

Lysine 268 is subject to N6-(pyridoxal phosphate)lysine.

Belongs to the class-III pyridoxal-phosphate-dependent aminotransferase family. HemL subfamily. As to quaternary structure, homodimer. It depends on pyridoxal 5'-phosphate as a cofactor.

The protein localises to the cytoplasm. It carries out the reaction (S)-4-amino-5-oxopentanoate = 5-aminolevulinate. It functions in the pathway porphyrin-containing compound metabolism; protoporphyrin-IX biosynthesis; 5-aminolevulinate from L-glutamyl-tRNA(Glu): step 2/2. The polypeptide is Glutamate-1-semialdehyde 2,1-aminomutase 1 (Bacillus licheniformis (strain ATCC 14580 / DSM 13 / JCM 2505 / CCUG 7422 / NBRC 12200 / NCIMB 9375 / NCTC 10341 / NRRL NRS-1264 / Gibson 46)).